We begin with the raw amino-acid sequence, 315 residues long: Eukaryotic translation initiation factor 2 subunit 1 (315 aa).

The 72-residue stretch at 17 to 88 folds into the S1 motif domain; sequence EDVVMVNVRS…EKGYIDLSKR (72 aa). A Phosphoserine; by HRI modification is found at S49. Phosphoserine is present on S52. The residue at position 141 (K141) is an N6-acetyllysine. S158 is modified (phosphoserine). Phosphothreonine occurs at positions 279 and 281. The tract at residues 293 to 315 is disordered; that stretch reads LERENAEVDGDDDAEEMEAKAED. A compositionally biased stretch (acidic residues) spans 299–308; the sequence is EVDGDDDAEE.

This sequence belongs to the eIF-2-alpha family. In terms of assembly, eukaryotic translation initiation factor 2 eIF2 is a heterotrimeric complex composed of an alpha (EIF2S1), a beta (EIF2S2) and a gamma (EIF2S3) chain. eIF2 is member of the 43S pre-initiation complex (43S PIC). eIF2 forms a complex with at least CELF1/CUGBP1, CALR, CALR3, EIF2S1, EIF2S2, HSP90B1 and HSPA5. Interaction with METAP2 protects EIF2S1 from inhibitory phosphorylation. Interacts with ABCF1. Associates with ribosomes. Interacts with DDX3X in an RNA-independent manner. Phosphorylation at Ser-49 and Ser-52 stabilizes the eIF-2/GDP/eIF2B complex and prevents GDP/GTP exchange reaction, thus impairing the recycling of eIF-2 between successive rounds of initiation and leading to global inhibition of translation, while concomitantly initiating the preferential translation of integrated stress response (ISR)-specific mRNAs. Substrate for at least 4 kinases: EIF2AK1/HRI, EIF2AK2/PKR, EIF2AK3/PERK and EIF2AK4/GCN2. Phosphorylation on Ser-52 by the EIF2AK4/GCN2 protein kinase occurs in response to amino acid starvation and UV irradiation. Phosphorylation at Ser-52 by the EIF2AK3/PERK protein kinase occurs in response to the unfolded protein response. Phosphorylation at Ser-52 by EIF2AK1/HRI in response to mitochondrial damage promotes relocalization to the mitochondrial surface.

It localises to the cytoplasm. It is found in the stress granule. The protein resides in the cytosol. The protein localises to the mitochondrion. Activity is regulated by phosphorylation at Ser-49 and Ser-52, which stabilizes the eIF2/GDP/eIF2B complex and prevents the eIF2B-mediated exchange of GDP for GTP, thereby preventing the formation of the 43S pre-initiation complex (43S PIC). This results in the global attenuation of 5' cap-dependent protein synthesis and concomitant translation of ISR-specific mRNAs that contain a short upstream open reading frame (uORF) in their 5' UTR, such as ATF4, ATF5, DDIT3/CHOP and PPP1R15A/GADD34. In terms of biological role, member of the eIF2 complex that functions in the early steps of protein synthesis by forming a ternary complex with GTP and initiator tRNA. This complex binds to a 40S ribosomal subunit, followed by mRNA binding to form a 43S pre-initiation complex. Junction of the 60S ribosomal subunit to form the 80S initiation complex is preceded by hydrolysis of the GTP bound to eIF2 and release of an eIF2-GDP binary complex. In order for eIF2 to recycle and catalyze another round of initiation, the GDP bound to eIF2 must exchange with GTP by way of a reaction catalyzed by eIF2B. EIF2S1/eIF2-alpha is a key component of the integrated stress response (ISR), required for adaptation to various stress: phosphorylation by metabolic-stress sensing protein kinases (EIF2AK1/HRI, EIF2AK2/PKR, EIF2AK3/PERK and EIF2AK4/GCN2) in response to stress converts EIF2S1/eIF2-alpha in a global protein synthesis inhibitor, leading to a attenuation of cap-dependent translation, while concomitantly initiating the preferential translation of ISR-specific mRNAs, such as the transcriptional activators ATF4 and QRICH1, and hence allowing ATF4- and QRICH1-mediated reprogramming. EIF2S1/eIF2-alpha also acts as an activator of mitophagy in response to mitochondrial damage: phosphorylation by EIF2AK1/HRI promotes relocalization to the mitochondrial surface, thereby triggering PRKN-independent mitophagy. The protein is Eukaryotic translation initiation factor 2 subunit 1 (EIF2S1) of Pongo abelii (Sumatran orangutan).